Consider the following 364-residue polypeptide: DNA polymerase IV (364 aa).

A UmuC domain is found at 14 to 198 (IIHIDMDAFF…LPIEKFHGVG (185 aa)). Residues aspartate 18 and aspartate 116 each coordinate Mg(2+). The active site involves glutamate 117.

It belongs to the DNA polymerase type-Y family. In terms of assembly, monomer. It depends on Mg(2+) as a cofactor.

The protein localises to the cytoplasm. It carries out the reaction DNA(n) + a 2'-deoxyribonucleoside 5'-triphosphate = DNA(n+1) + diphosphate. Its function is as follows. Poorly processive, error-prone DNA polymerase involved in untargeted mutagenesis. Copies undamaged DNA at stalled replication forks, which arise in vivo from mismatched or misaligned primer ends. These misaligned primers can be extended by PolIV. Exhibits no 3'-5' exonuclease (proofreading) activity. May be involved in translesional synthesis, in conjunction with the beta clamp from PolIII. This Streptococcus pyogenes serotype M18 (strain MGAS8232) protein is DNA polymerase IV.